The following is a 493-amino-acid chain: Trigger factor (493 aa).

The region spanning 169–254 is the PPIase FKBP-type domain; that stretch reads GDRVTMDYLG…VKEVAAPAET (86 aa). Residues 439–493 are disordered; that stretch reads ELLAEDEDGDDTKPAKKSAKKKAAKAEDASAEGEEAAPKKKAAAKKKAADEGDAE.

It belongs to the FKBP-type PPIase family. Tig subfamily.

It is found in the cytoplasm. The catalysed reaction is [protein]-peptidylproline (omega=180) = [protein]-peptidylproline (omega=0). Functionally, involved in protein export. Acts as a chaperone by maintaining the newly synthesized protein in an open conformation. Functions as a peptidyl-prolyl cis-trans isomerase. This is Trigger factor from Allorhizobium ampelinum (strain ATCC BAA-846 / DSM 112012 / S4) (Agrobacterium vitis (strain S4)).